A 206-amino-acid polypeptide reads, in one-letter code: Thymidylate kinase (206 aa).

An ATP-binding site is contributed by glycine 11 to threonine 18.

The protein belongs to the thymidylate kinase family.

The catalysed reaction is dTMP + ATP = dTDP + ADP. Functionally, phosphorylation of dTMP to form dTDP in both de novo and salvage pathways of dTTP synthesis. The sequence is that of Thymidylate kinase from Burkholderia cenocepacia (strain ATCC BAA-245 / DSM 16553 / LMG 16656 / NCTC 13227 / J2315 / CF5610) (Burkholderia cepacia (strain J2315)).